Here is a 658-residue protein sequence, read N- to C-terminus: Integrator complex subunit 9 (658 aa).

A disordered region spans residues 550-574 (KHVLQLPPKPPQPPTSKKRKRVSDD). Positions 566–570 (KKRKR) match the Nuclear localization signal motif.

Belongs to the metallo-beta-lactamase superfamily. RNA-metabolizing metallo-beta-lactamase-like family. INTS9 subfamily. As to quaternary structure, component of the Integrator complex, composed of core subunits INTS1, INTS2, INTS3, INTS4, INTS5, INTS6, INTS7, INTS8, INTS9/RC74, INTS10, INTS11/CPSF3L, INTS12, INTS13, INTS14 and INTS15. The core complex associates with protein phosphatase 2A subunits PPP2CA and PPP2R1A, to form the Integrator-PP2A (INTAC) complex. INTS9 is part of the RNA endonuclease subcomplex, composed of INTS4, INTS9, INTS11 and inositol hexakisphosphate (InsP6).

The protein localises to the nucleus. It is found in the cytoplasm. In terms of biological role, component of the integrator complex, a multiprotein complex that terminates RNA polymerase II (Pol II) transcription in the promoter-proximal region of genes. The integrator complex provides a quality checkpoint during transcription elongation by driving premature transcription termination of transcripts that are unfavorably configured for transcriptional elongation: the complex terminates transcription by (1) catalyzing dephosphorylation of the C-terminal domain (CTD) of Pol II subunit POLR2A/RPB1 and SUPT5H/SPT5, (2) degrading the exiting nascent RNA transcript via endonuclease activity and (3) promoting the release of Pol II from bound DNA. The integrator complex is also involved in terminating the synthesis of non-coding Pol II transcripts, such as enhancer RNAs (eRNAs), small nuclear RNAs (snRNAs), telomerase RNAs and long non-coding RNAs (lncRNAs). The polypeptide is Integrator complex subunit 9 (INTS9) (Gallus gallus (Chicken)).